The following is a 175-amino-acid chain: ATP synthase subunit b (175 aa).

Residues 20–40 (LIFWTAITFVIVLLILKKIAW) traverse the membrane as a helical segment.

Belongs to the ATPase B chain family. F-type ATPases have 2 components, F(1) - the catalytic core - and F(0) - the membrane proton channel. F(1) has five subunits: alpha(3), beta(3), gamma(1), delta(1), epsilon(1). F(0) has four main subunits: a(1), b(2) and c(10-14). The alpha and beta chains form an alternating ring which encloses part of the gamma chain. F(1) is attached to F(0) by a central stalk formed by the gamma and epsilon chains, while a peripheral stalk is formed by the delta and b chains.

It is found in the cell inner membrane. Its function is as follows. F(1)F(0) ATP synthase produces ATP from ADP in the presence of a proton or sodium gradient. F-type ATPases consist of two structural domains, F(1) containing the extramembraneous catalytic core and F(0) containing the membrane proton channel, linked together by a central stalk and a peripheral stalk. During catalysis, ATP synthesis in the catalytic domain of F(1) is coupled via a rotary mechanism of the central stalk subunits to proton translocation. In terms of biological role, component of the F(0) channel, it forms part of the peripheral stalk, linking F(1) to F(0). This chain is ATP synthase subunit b, found in Pelodictyon phaeoclathratiforme (strain DSM 5477 / BU-1).